The primary structure comprises 149 residues: D-aminoacyl-tRNA deacylase (149 aa).

A Gly-cisPro motif, important for rejection of L-amino acids motif is present at residues 137–138 (GP).

It belongs to the DTD family. As to quaternary structure, homodimer.

The protein localises to the cytoplasm. The catalysed reaction is glycyl-tRNA(Ala) + H2O = tRNA(Ala) + glycine + H(+). It carries out the reaction a D-aminoacyl-tRNA + H2O = a tRNA + a D-alpha-amino acid + H(+). An aminoacyl-tRNA editing enzyme that deacylates mischarged D-aminoacyl-tRNAs. Also deacylates mischarged glycyl-tRNA(Ala), protecting cells against glycine mischarging by AlaRS. Acts via tRNA-based rather than protein-based catalysis; rejects L-amino acids rather than detecting D-amino acids in the active site. By recycling D-aminoacyl-tRNA to D-amino acids and free tRNA molecules, this enzyme counteracts the toxicity associated with the formation of D-aminoacyl-tRNA entities in vivo and helps enforce protein L-homochirality. The sequence is that of D-aminoacyl-tRNA deacylase from Herminiimonas arsenicoxydans.